Reading from the N-terminus, the 302-residue chain is Ribosomal RNA small subunit methyltransferase H (302 aa).

S-adenosyl-L-methionine contacts are provided by residues 36–38 (GGH), D56, F84, D99, and Q106.

The protein belongs to the methyltransferase superfamily. RsmH family.

The protein localises to the cytoplasm. The catalysed reaction is cytidine(1402) in 16S rRNA + S-adenosyl-L-methionine = N(4)-methylcytidine(1402) in 16S rRNA + S-adenosyl-L-homocysteine + H(+). Specifically methylates the N4 position of cytidine in position 1402 (C1402) of 16S rRNA. This is Ribosomal RNA small subunit methyltransferase H from Flavobacterium johnsoniae (strain ATCC 17061 / DSM 2064 / JCM 8514 / BCRC 14874 / CCUG 350202 / NBRC 14942 / NCIMB 11054 / UW101) (Cytophaga johnsonae).